Here is a 1481-residue protein sequence, read N- to C-terminus: Cystic fibrosis transmembrane conductance regulator (1481 aa).

Residues 1–77 (MQRSPLEKAS…KLINALRRCF (77 aa)) lie on the Cytoplasmic side of the membrane. Residues 78–98 (FWRFMFYGIILYLGEVTKAVQ) form a helical membrane-spanning segment. Residues 81-365 (FMFYGIILYL…WAVQTWYDSL (285 aa)) form the ABC transmembrane type-1 1 domain. The Extracellular segment spans residues 99–122 (PLLLGRIIASYDPDNKAERSIAIY). A helical transmembrane segment spans residues 123–146 (LGIGLCLLFIVRTLLLHPAIFGLH). At 147–195 (HIGMQMRIAMFSLIYKKTLKLSSRVLDKISIGQLVSLLSNNLNKFDEGL) the chain is on the cytoplasmic side. A helical transmembrane segment spans residues 196–216 (ALAHFVWIAPLQVTLLMGLLW). Over 217 to 222 (ELLQAF) the chain is Extracellular. The helical transmembrane segment at 223-243 (TFCGLAFLVVLAFLQAGLGKM) threads the bilayer. Residues 244 to 298 (MMKYRDQRAGKINERLVITSEIIENIQSVKAYCWEEAMEKIIENLRQTELKLTRK) lie on the Cytoplasmic side of the membrane. The helical transmembrane segment at 299-319 (AAYVRYLNSSAFFFSGFFVVF) threads the bilayer. Topologically, residues 320–339 (LSVLPYALLKGIILRKIFTT) are extracellular. The chain crosses the membrane as a helical span at residues 340 to 358 (ISFCIVLRMAVTRQFPWAV). The Cytoplasmic portion of the chain corresponds to 359–858 (QTWYDSLGAI…YLRYITVHKS (500 aa)). ATP is bound by residues Trp401, 457 to 464 (GSTGAGKT), and Gln492. The region spanning 423 to 645 (NGDNNLFFSN…RPDFSSKLMG (223 aa)) is the ABC transporter 1 domain. Residue Cys523 is the site of S-palmitoyl cysteine attachment. A phosphoserine mark is found at Ser548 and Ser659. The segment at 653–831 (TAERRNSIIT…EEINEEDLRD (179 aa)) is disordered R region. At Ser669 the chain carries Phosphoserine; by PKA. Residue Ser685 is modified to Phosphoserine. Lys687 participates in a covalent cross-link: Glycyl lysine isopeptide (Lys-Gly) (interchain with G-Cter in ubiquitin). Ser699 and Ser711 each carry phosphoserine. Thr716 bears the Phosphothreonine mark. Ser736, Ser767, Ser790, Ser795, and Ser813 each carry phosphoserine. Residues 859–879 (LMFVLIWCLVVFLAEVAASLV) traverse the membrane as a helical segment. Positions 859 to 1155 (LMFVLIWCLV…AVNSSIDVDS (297 aa)) constitute an ABC transmembrane type-1 2 domain. The Extracellular segment spans residues 880–918 (VLCLFPKILFQDKGNSTKSANNSYAVIITSTSSYYIFYI). 2 N-linked (GlcNAc...) asparagine glycosylation sites follow: Asn894 and Asn900. Residues 919 to 939 (YVGVADTLLALGLFRGLPLVH) traverse the membrane as a discontinuously helical segment. Over 940–990 (TLITVSKTLHHKMLQSVLQAPMSTLNTLKTGGILNRFSKDIAVLDDLLPLT) the chain is Cytoplasmic. The helical transmembrane segment at 991–1011 (IFDFVQLLLIVIGAVVVVSVL) threads the bilayer. At 1012–1013 (QP) the chain is on the extracellular side. Residues 1014 to 1034 (YIFLATVPVIAAFILLRAYFL) traverse the membrane as a helical segment. At 1035–1095 (HTSQQLKQLE…TANWFLYLST (61 aa)) the chain is on the cytoplasmic side. Residues 1096–1116 (LRWFQMRIEMIFVIFFIAVTF) form a helical membrane-spanning segment. Residues 1117-1130 (ISILTTGEGEGRVG) are Extracellular-facing. A helical membrane pass occupies residues 1131–1151 (IILTLAMNIMGTLQWAVNSSI). Topologically, residues 1152 to 1481 (DVDSLMRSVS…TEEEVQETKI (330 aa)) are cytoplasmic. One can recognise an ABC transporter 2 domain in the interval 1211-1444 (MTVKDLTAKY…KSLFRQAISP (234 aa)). ATP-binding positions include Tyr1220 and 1245-1252 (GRTGSGKS). Residues 1387-1481 (RTLKQAFADC…TEEEVQETKI (95 aa)) are interaction with GORASP2. The S-palmitoyl cysteine moiety is linked to residue Cys1396. The segment at 1452 to 1481 (PQRNSSRQKSRSNIAALKEETEEEVQETKI) is disordered. The span at 1453–1464 (QRNSSRQKSRSN) shows a compositional bias: low complexity. Phosphoserine is present on Ser1457. Residues 1471–1481 (ETEEEVQETKI) show a composition bias toward acidic residues. Positions 1479-1481 (TKI) match the PDZ-binding motif.

This sequence belongs to the ABC transporter superfamily. ABCC family. CFTR transporter (TC 3.A.1.202) subfamily. In terms of assembly, monomer; does not require oligomerization for channel activity. May form oligomers in the membrane. Interacts with SLC26A3, SLC26A6 and NHERF1. Interacts with SHANK2. Interacts with MYO6. Interacts (via C-terminus) with GOPC (via PDZ domain); this promotes CFTR internalization and thereby decreases channel activity. Interacts with SLC4A7 through NHERF1. Found in a complex with MYO5B and RAB11A. Interacts with ANO1. Interacts with SLC26A8. Interacts with AHCYL1; the interaction increases CFTR activity. Interacts with CSE1L. The core-glycosylated form interacts with GORASP2 (via PDZ GRASP-type 1 domain) in respone to ER stress. Interacts with MARCHF2; the interaction leads to CFTR ubiqtuitination and degradation. Interacts with ADGRG2. In terms of processing, N-glycosylated. Phosphorylated; cAMP treatment promotes phosphorylation and activates the channel. Dephosphorylation decreases the ATPase activity (in vitro). Phosphorylation at PKA sites activates the channel. Phosphorylation at PKC sites enhances the response to phosphorylation by PKA. Phosphorylated by AMPK; this inhibits channel activity. Post-translationally, ubiquitinated, leading to its degradation in the lysosome. Deubiquitination by USP10 in early endosomes enhances its endocytic recycling to the cell membrane. Ubiquitinated by RNF185 during ER stress. Ubiquitinated by MARCHF2.

Its subcellular location is the apical cell membrane. It is found in the early endosome membrane. The protein resides in the cell membrane. It localises to the recycling endosome membrane. The protein localises to the endoplasmic reticulum membrane. Its subcellular location is the nucleus. The catalysed reaction is ATP + H2O + closed Cl(-) channel = ADP + phosphate + open Cl(-) channel.. The enzyme catalyses chloride(in) = chloride(out). It carries out the reaction hydrogencarbonate(in) = hydrogencarbonate(out). It catalyses the reaction ATP + H2O = ADP + phosphate + H(+). In terms of biological role, epithelial ion channel that plays an important role in the regulation of epithelial ion and water transport and fluid homeostasis. Mediates the transport of chloride ions across the cell membrane. Possesses an intrinsic ATPase activity and utilizes ATP to gate its channel; the passive flow of anions through the channel is gated by cycles of ATP binding and hydrolysis by the ATP-binding domains. The ion channel is also permeable to HCO(3)(-); selectivity depends on the extracellular chloride concentration. Exerts its function also by modulating the activity of other ion channels and transporters. Contributes to the regulation of the pH and the ion content of the epithelial fluid layer. Modulates the activity of the epithelial sodium channel (ENaC) complex, in part by regulating the cell surface expression of the ENaC complex. May regulate bicarbonate secretion and salvage in epithelial cells by regulating the transporter SLC4A7. Can inhibit the chloride channel activity of ANO1. Plays a role in the chloride and bicarbonate homeostasis during sperm epididymal maturation and capacitation. The chain is Cystic fibrosis transmembrane conductance regulator from Muntiacus reevesi (Reeves' muntjac).